A 74-amino-acid chain; its full sequence is Protein krueppel (74 aa).

4 consecutive C2H2-type zinc fingers follow at residues 1–4 (ERTH), 10–32 (FECPECHKRFTRDHHLKTHMRLH), 38–60 (YHCSHCDRQFVQVANLRRHLRVH), and 66–74 (YTCEICDGK).

This sequence belongs to the krueppel C2H2-type zinc-finger protein family.

It localises to the nucleus. In terms of biological role, krueppel is a gap class segmentation protein. This is Protein krueppel (Kr) from Musca domestica (House fly).